A 557-amino-acid chain; its full sequence is Aerobic glycerol-3-phosphate dehydrogenase (557 aa).

D21–E49 is an FAD binding site.

This sequence belongs to the FAD-dependent glycerol-3-phosphate dehydrogenase family. FAD is required as a cofactor.

Its subcellular location is the cytoplasm. It catalyses the reaction a quinone + sn-glycerol 3-phosphate = dihydroxyacetone phosphate + a quinol. It functions in the pathway polyol metabolism; glycerol degradation via glycerol kinase pathway; glycerone phosphate from sn-glycerol 3-phosphate (aerobic route): step 1/1. The sequence is that of Aerobic glycerol-3-phosphate dehydrogenase (glpD) from Staphylococcus aureus (strain bovine RF122 / ET3-1).